The chain runs to 654 residues: Spindle assembly abnormal protein 6 homolog (654 aa).

A PISA domain is found at 39–91 (VHRKDLVIRLTDDTDPFFLYNLVISEEDFQSLKLQQGLLVDFLAFPQKFIDLL). Positions 175–471 (TRQLHITQET…QLLKNNEKLI (297 aa)) form a coiled coil. Phosphoserine is present on S509. The disordered stretch occupies residues 568–589 (ASIDGQPGAAVNRPCSNDKENG). Residue S612 is modified to Phosphoserine. Residues 634-644 (SKPTVLPSSSS) show a composition bias toward low complexity. Positions 634 to 654 (SKPTVLPSSSSAYFPGQLPSS) are disordered. S654 carries the phosphoserine modification.

As to quaternary structure, nine homodimers form a cartwheel structure with an internal diameter of 23 nm and radial spokes connecting to the microtubule triplets. Forms a complex with CPAP and STIL. Interacts with FBXW5. Interacts with NUP62 and TUBG1 at the centrosome. Interacts with CENATAC; the interaction increases with CENATAC acetylation. Interacts with FZR1; the interaction is regulated by CENATAC and leads to SASS6 proteasomal degradation. Ubiquitinated by the SCF(FBXW5) E3 ubiquitin-protein ligase complex during S phase, leading to its degradation and preventing centriole reduplication. Ubiquitinated by the anaphase promoting complex/cyclosome (APC/C) E3 ubiquitin-protein ligase complex, leading to its degradation and preventing centriole reduplication.

The protein localises to the cytoplasm. The protein resides in the cytoskeleton. It localises to the microtubule organizing center. Its subcellular location is the centrosome. It is found in the centriole. Central scaffolding component of the centrioles ensuring their 9-fold symmetry. Required for centrosome biogenesis and duplication. Required both for mother-centriole-dependent centriole duplication and deuterosome-dependent centriole amplification in multiciliated cells. Not required for centriole formation in embryonic stem cells but necessary to maintain centriole architecture. Required for the recruitment of STIL to the procentriole and for STIL-mediated centriole amplification. This is Spindle assembly abnormal protein 6 homolog from Mus musculus (Mouse).